The sequence spans 273 residues: Serine acetyltransferase (273 aa).

It belongs to the transferase hexapeptide repeat family. In terms of assembly, homohexamer. Dimer of a homotrimer.

It localises to the cytoplasm. It catalyses the reaction L-serine + acetyl-CoA = O-acetyl-L-serine + CoA. It functions in the pathway amino-acid biosynthesis; L-cysteine biosynthesis; L-cysteine from L-serine: step 1/2. The sequence is that of Serine acetyltransferase (cysE) from Shigella flexneri.